The chain runs to 478 residues: Probable cytosolic Fe-S cluster assembly factor AGAP009023 (478 aa).

[4Fe-4S] cluster-binding residues include Cys-23, Cys-69, Cys-72, Cys-75, Cys-189, Cys-245, Cys-396, and Cys-400.

This sequence belongs to the NARF family.

Its function is as follows. Component of the cytosolic iron-sulfur (Fe/S) protein assembly machinery. Required for maturation of extramitochondrial Fe/S proteins. In Anopheles gambiae (African malaria mosquito), this protein is Probable cytosolic Fe-S cluster assembly factor AGAP009023.